We begin with the raw amino-acid sequence, 159 residues long: MAEQTEKAFLKQPKVFLSSKKSGKGKKPGKGGNRFWKSIGLGFKTPREAIEGTYIDKKCPFTGTVSIRGRIIAGTCHSAKMNRTIIVRRNYLHFVKKYQRYEKRHSNIPAHISPCFRVKEGDHVIIGQCRPLSKTVRFNVVKVIPAGSAAAGKKAFTAA.

The protein belongs to the universal ribosomal protein uS17 family.

The protein resides in the cytoplasm. This is Small ribosomal subunit protein uS17 (RPS11) from Zea mays (Maize).